We begin with the raw amino-acid sequence, 83 residues long: Small ribosomal subunit protein uS15c (83 aa).

The protein belongs to the universal ribosomal protein uS15 family. As to quaternary structure, part of the 30S ribosomal subunit.

Its subcellular location is the plastid. It is found in the chloroplast. This Fagopyrum esculentum subsp. ancestrale (Wild buckwheat) protein is Small ribosomal subunit protein uS15c (rps15).